The sequence spans 274 residues: 2,3,4,5-tetrahydropyridine-2,6-dicarboxylate N-succinyltransferase (274 aa).

Residues Arg-104 and Asp-141 each coordinate substrate.

The protein belongs to the transferase hexapeptide repeat family. Homotrimer.

The protein localises to the cytoplasm. The catalysed reaction is (S)-2,3,4,5-tetrahydrodipicolinate + succinyl-CoA + H2O = (S)-2-succinylamino-6-oxoheptanedioate + CoA. Its pathway is amino-acid biosynthesis; L-lysine biosynthesis via DAP pathway; LL-2,6-diaminopimelate from (S)-tetrahydrodipicolinate (succinylase route): step 1/3. In Idiomarina loihiensis (strain ATCC BAA-735 / DSM 15497 / L2-TR), this protein is 2,3,4,5-tetrahydropyridine-2,6-dicarboxylate N-succinyltransferase.